A 478-amino-acid polypeptide reads, in one-letter code: E3 ubiquitin-protein ligase makorin-1 (478 aa).

C3H1-type zinc fingers lie at residues 51-78 (WTKQ…HDLS), 80-107 (SQSA…HTKP), and 204-231 (EMKK…HGDA). The segment at 232-259 (CDMCGLQVLHPVDAAQRSQHIKSCIEAH) is makorin-type Cys-His. The RING-type zinc finger occupies 277–331 (CGICMEVVYEKANPSERRFGILSNCNHTYCLKCIRKWRSAKQFESKIIKSCPECR). The C3H1-type 4 zinc finger occupies 360–389 (AMSNKPCRYFDEGRGSCPFGGNCFYKHAYP).

Interacts with p53/TP53 and CDKN1A. Interacts with TERT, modulating telomere length homeostasis. In terms of processing, auto-ubiquitinated; which leads to proteasomal degradation.

It carries out the reaction S-ubiquitinyl-[E2 ubiquitin-conjugating enzyme]-L-cysteine + [acceptor protein]-L-lysine = [E2 ubiquitin-conjugating enzyme]-L-cysteine + N(6)-ubiquitinyl-[acceptor protein]-L-lysine.. It participates in protein modification; protein ubiquitination. In terms of biological role, E3 ubiquitin ligase catalyzing the covalent attachment of ubiquitin moieties onto substrate proteins. These substrates include FILIP1, p53/TP53, CDKN1A and TERT. Keeps cells alive by suppressing p53/TP53 under normal conditions, but stimulates apoptosis by repressing CDKN1A under stress conditions. Acts as a negative regulator of telomerase. Has negative and positive effects on RNA polymerase II-dependent transcription. The protein is E3 ubiquitin-protein ligase makorin-1 (MKRN1) of Notamacropus eugenii (Tammar wallaby).